The chain runs to 193 residues: Adenine phosphoribosyltransferase (193 aa).

It belongs to the purine/pyrimidine phosphoribosyltransferase family. Homodimer.

The protein localises to the cytoplasm. The catalysed reaction is AMP + diphosphate = 5-phospho-alpha-D-ribose 1-diphosphate + adenine. The protein operates within purine metabolism; AMP biosynthesis via salvage pathway; AMP from adenine: step 1/1. Its function is as follows. Catalyzes a salvage reaction resulting in the formation of AMP, that is energically less costly than de novo synthesis. The protein is Adenine phosphoribosyltransferase of Chromobacterium violaceum (strain ATCC 12472 / DSM 30191 / JCM 1249 / CCUG 213 / NBRC 12614 / NCIMB 9131 / NCTC 9757 / MK).